Here is a 193-residue protein sequence, read N- to C-terminus: Probable nicotinate-nucleotide adenylyltransferase (193 aa).

It belongs to the NadD family.

It carries out the reaction nicotinate beta-D-ribonucleotide + ATP + H(+) = deamido-NAD(+) + diphosphate. The protein operates within cofactor biosynthesis; NAD(+) biosynthesis; deamido-NAD(+) from nicotinate D-ribonucleotide: step 1/1. In terms of biological role, catalyzes the reversible adenylation of nicotinate mononucleotide (NaMN) to nicotinic acid adenine dinucleotide (NaAD). The polypeptide is Probable nicotinate-nucleotide adenylyltransferase (Coprothermobacter proteolyticus (strain ATCC 35245 / DSM 5265 / OCM 4 / BT)).